The sequence spans 515 residues: Maturase K (515 aa).

It belongs to the intron maturase 2 family. MatK subfamily.

The protein resides in the plastid. It is found in the chloroplast. In terms of biological role, usually encoded in the trnK tRNA gene intron. Probably assists in splicing its own and other chloroplast group II introns. The polypeptide is Maturase K (Larix laricina (Tamarack)).